A 164-amino-acid chain; its full sequence is MPEQLNTRVEDCFQLAESFFKRPFKRPVVSLKLRGQKAGVAHLHENLLRFNPQLYRENTEDFLKQTVAHEVAHLIAHQLFGERIQPHGEEWQLIMRGVYELPPNRCHTYDVKRRSVTRYIYRCPCAESDFPFSAQRHKLVAQGRRYLCRRCRQTLVYSGETRVE.

Residues 14 to 156 form the SprT-like domain; the sequence is QLAESFFKRP…LCRRCRQTLV (143 aa). Position 69 (His-69) interacts with Zn(2+). Glu-70 is a catalytic residue. A Zn(2+)-binding site is contributed by His-73.

This sequence belongs to the SprT family. Requires Zn(2+) as cofactor.

It is found in the cytoplasm. In Pseudomonas fluorescens (strain ATCC BAA-477 / NRRL B-23932 / Pf-5), this protein is Protein SprT.